The sequence spans 26 residues: Thrombin-like enzyme LmrSP-3 (26 aa).

It belongs to the peptidase S1 family. Snake venom subfamily. As to expression, expressed by the venom gland.

Its subcellular location is the secreted. Thrombin-like snake venom serine protease that cleaves alpha-chain of fibrinogen (FGA) releases only fibrinopeptide A. Shows coagulant, esterase and amidase activities. The chain is Thrombin-like enzyme LmrSP-3 from Lachesis muta rhombeata (Bushmaster).